Reading from the N-terminus, the 554-residue chain is MFS-type transporter tstD (554 aa).

Composition is skewed to polar residues over residues 1 to 10 (MPEPFNSTMP) and 27 to 38 (QDSNQPPEMSAS). Residues 1–68 (MPEPFNSTMP…ESENNEPYSV (68 aa)) form a disordered region. The N-linked (GlcNAc...) asparagine glycan is linked to Asn-6. A compositionally biased stretch (basic and acidic residues) spans 39-48 (SEKKHPENEN). A helical transmembrane segment spans residues 76 to 96 (LMVLAASLAGFFSPLSASIYY). N-linked (GlcNAc...) asparagine glycans are attached at residues Asn-107 and Asn-114. 5 helical membrane-spanning segments follow: residues 115–135 (LTVT…ASFS), 142–162 (PGYA…ALQN), 173–193 (LQSA…SDII), 202–222 (IAFA…IGGL), and 231–251 (WIFW…FLFF). The interval 281–300 (KEKQRQQRAENEEENANRQR) is disordered. 3 helical membrane passes run 311 to 331 (VFVV…GVAF), 354 to 374 (IKVA…ALST), and 413 to 433 (IALP…WLMT). N-linked (GlcNAc...) asparagine glycosylation is present at Asn-437. Helical transmembrane passes span 442 to 462 (IILL…LNVL), 473 to 493 (MVTA…AAMI), and 504 to 524 (WSYT…LLTM).

It belongs to the major facilitator superfamily.

It is found in the membrane. In terms of biological role, MFS-type transporter; part of the gene cluster that mediates the biosynthesis of the antihypercholesterolemic agents phomoidrides which are dimeric anhydrides. The chain is MFS-type transporter tstD from Talaromyces stipitatus (strain ATCC 10500 / CBS 375.48 / QM 6759 / NRRL 1006) (Penicillium stipitatum).